The following is a 64-amino-acid chain: Crotamine CRO3 (64 aa).

Positions 1–22 are cleaved as a signal peptide; that stretch reads MILYLLFAFLFLAFLSEPGNAY. 3 disulfides stabilise this stretch: Cys25-Cys57, Cys32-Cys51, and Cys39-Cys58.

The protein belongs to the crotamine-myotoxin family. Monomer. Expressed by the venom gland.

The protein resides in the secreted. Functionally, cationic peptide that possesses multiple functions. It acts as a cell-penetrating peptide (CPP), and as a potent voltage-gated potassium channel (Kv) inhibitor. It exhibits antimicrobial activities, hind limb paralysis, and severe muscle necrosis by a non-enzymatic mechanism. The chain is Crotamine CRO3 (CRO3) from Crotalus durissus terrificus (South American rattlesnake).